A 193-amino-acid polypeptide reads, in one-letter code: Ion-translocating oxidoreductase complex subunit A (193 aa).

6 consecutive transmembrane segments (helical) span residues 5–25, 39–59, 72–92, 102–122, 134–154, and 171–191; these read LLLL…FLGL, IGMS…SYLV, LTTM…EMVV, LLGI…VALL, IIYG…FSAM, and AIAM…TGLV.

The protein belongs to the NqrDE/RnfAE family. The complex is composed of six subunits: RnfA, RnfB, RnfC, RnfD, RnfE and RnfG.

It localises to the cell inner membrane. Its function is as follows. Part of a membrane-bound complex that couples electron transfer with translocation of ions across the membrane. This is Ion-translocating oxidoreductase complex subunit A from Colwellia psychrerythraea (strain 34H / ATCC BAA-681) (Vibrio psychroerythus).